Here is a 132-residue protein sequence, read N- to C-terminus: Small ribosomal subunit protein uS8 (132 aa).

It belongs to the universal ribosomal protein uS8 family. As to quaternary structure, part of the 30S ribosomal subunit. Contacts proteins S5 and S12.

One of the primary rRNA binding proteins, it binds directly to 16S rRNA central domain where it helps coordinate assembly of the platform of the 30S subunit. In Chelativorans sp. (strain BNC1), this protein is Small ribosomal subunit protein uS8.